The following is a 153-amino-acid chain: Proline-rich membrane anchor 1 (153 aa).

The N-terminal stretch at 1-35 (MLLRDLVLRHGCCWPSLLLHCALHPLWGLVQVTHA) is a signal peptide. Residues 36-92 (EPQKSCSKVTDSCQHICQCRPPPPLPPPPPPPPPPRLLSAPAPNSTSCPAEDSWWSG) lie on the Extracellular side of the membrane. Residues 56 to 70 (PPPPLPPPPPPPPPP) enclose the PRAD domain. The segment covering 59-71 (PLPPPPPPPPPPR) has biased composition (pro residues). The interval 59–79 (PLPPPPPPPPPPRLLSAPAPN) is disordered. The N-linked (GlcNAc...) asparagine glycan is linked to asparagine 79. A helical membrane pass occupies residues 93–113 (LVIIVAVVCASLVFLTVLVII). The Cytoplasmic portion of the chain corresponds to 114-153 (CYKAIKRKPLRKDENGASVAEYPMSSSPSNKGVDVNAAVV). The disordered stretch occupies residues 133–153 (AEYPMSSSPSNKGVDVNAAVV).

Interacts with ACHE, probably through disulfide bonds. Isoforms 1 and 2 are expressed in the adult brain. In matured cortical neurons, only isoform 1 is detectable.

It is found in the cell membrane. Its subcellular location is the cell junction. The protein resides in the synapse. Its function is as follows. Required to anchor acetylcholinesterase (ACHE) to the basal lamina of the neuromuscular junction and to the membrane of neuronal synapses in brain. Organizes ACHE into tetramers. The chain is Proline-rich membrane anchor 1 (Prima1) from Rattus norvegicus (Rat).